A 100-amino-acid chain; its full sequence is Large ribosomal subunit protein eL21 (100 aa).

The protein belongs to the eukaryotic ribosomal protein eL21 family.

In Pyrobaculum aerophilum (strain ATCC 51768 / DSM 7523 / JCM 9630 / CIP 104966 / NBRC 100827 / IM2), this protein is Large ribosomal subunit protein eL21.